The primary structure comprises 328 residues: NADH-quinone oxidoreductase subunit H 1 (328 aa).

The next 8 helical transmembrane spans lie at 11 to 31 (VVKAVVLALCVTLAVAVFLLF), 81 to 101 (LAPVIAFFCALGVWVVIPWAP), 116 to 136 (VLVILAIAAMGVYGTALGGWA), 154 to 174 (ISYELAMAMSLLGVILMTGSV), 189 to 209 (LFPQFLGFLVFYIASLAEAGW), 235 to 257 (GLFFLTELTHAVNSAVLSTTFFL), 269 to 289 (IPGFVWFLLKVILMVFVLYWI), and 308 to 328 (VLLPVAALNLVGTAIYVALWA).

Belongs to the complex I subunit 1 family. In terms of assembly, NDH-1 is composed of 14 different subunits. Subunits NuoA, H, J, K, L, M, N constitute the membrane sector of the complex.

It localises to the cell membrane. It catalyses the reaction a quinone + NADH + 5 H(+)(in) = a quinol + NAD(+) + 4 H(+)(out). Functionally, NDH-1 shuttles electrons from NADH, via FMN and iron-sulfur (Fe-S) centers, to quinones in the respiratory chain. The immediate electron acceptor for the enzyme in this species is believed to be ubiquinone. Couples the redox reaction to proton translocation (for every two electrons transferred, four hydrogen ions are translocated across the cytoplasmic membrane), and thus conserves the redox energy in a proton gradient. This subunit may bind ubiquinone. The polypeptide is NADH-quinone oxidoreductase subunit H 1 (Symbiobacterium thermophilum (strain DSM 24528 / JCM 14929 / IAM 14863 / T)).